Here is a 669-residue protein sequence, read N- to C-terminus: Sodium-dependent phosphate transporter (669 aa).

At 1–6 (MVTGPD) the chain is on the extracellular side. A helical transmembrane segment spans residues 7-27 (MLWLVITSGIACFFMAFVTGA). Topologically, residues 28-47 (NDIANTFSTSIGSKAISIKK) are cytoplasmic. Residues 48 to 68 (ALIVAFFFEALGASLLGGTVT) traverse the membrane as a helical segment. Residues 69-86 (DSIRSKIINFQVFYDTPE) lie on the Extracellular side of the membrane. Residues 87 to 107 (FLMLGMCCALMGATVWLAVAT) form a helical membrane-spanning segment. Arg108 is a topological domain (cytoplasmic). Residues 109–129 (AGLPVSTTHSIIGALLGFGLA) traverse the membrane as a helical segment. The Extracellular portion of the chain corresponds to 130–143 (TGNMKSIKWEKINN). The helical transmembrane segment at 144 to 164 (IVISWLAAPILAGTCSAIAFT) threads the bilayer. At 165 to 186 (VLRMLILRKKNSFEIIKKMYWF) the chain is on the cytoplasmic side. Residues 187 to 207 (LIFLITLPFSVFLIFHNPIVI) traverse the membrane as a helical segment. Topologically, residues 208–239 (NTQCKMKKDGKVIVSSPCYIEDWSAAHSFYAS) are extracellular. Residues 240–260 (IICILLSSLLTAIGSFVIYII) form a helical membrane-spanning segment. Residues 261–502 (YNKRINNYNL…YNNGIRGKIK (242 aa)) lie on the Cytoplasmic side of the membrane. Over residues 311-335 (AHNNTSNGTKQNQVGNGTKSNNNNV) the composition is skewed to polar residues. Disordered stretches follow at residues 311–364 (AHNN…SVEA) and 392–444 (TNMN…KNME). Residues 342 to 352 (KNVKSQQDDSK) show a composition bias toward basic and acidic residues. Residues 395–433 (NENNNNSNKNNNSNKNNNSNKNNNSNKNNNSNNGNSNEG) show a composition bias toward low complexity. A helical membrane pass occupies residues 503–523 (VQWYILLFGGLSMSLGLSIMG). Topologically, residues 524–542 (YRVIKTVGMKLIKITPARG) are extracellular. The chain crosses the membrane as a helical span at residues 543-563 (FTIELISGLVVLFFSICGIPL). Residues 564–632 (SSTHCAVSSV…TSCVNLRLFR (69 aa)) lie on the Cytoplasmic side of the membrane. Residues 633–653 (TVFLSWILTVVFSATVTAGIY) form a helical membrane-spanning segment. Residues 654 to 669 (SFAAYSPSYIMKMQTV) lie on the Extracellular side of the membrane.

This sequence belongs to the inorganic phosphate transporter (PiT) (TC 2.A.20) family.

The protein resides in the cell membrane. It carries out the reaction 2 Na(+)(out) + phosphate(out) = 2 Na(+)(in) + phosphate(in). Sodium-phosphate symporter which preferentially transports the monovalent form of phosphate with a stoichiometry of two sodium ions per phosphate ion. In Plasmodium falciparum, this protein is Sodium-dependent phosphate transporter.